The primary structure comprises 305 residues: MNYQTILEEIEKEIQALFVEGKVASYIPALANVNPNQFSMAIKMFDGQTFGVGEIDKKFSIQSISKVFTFTLALNYYGKELYKRVSHEPSGNPFNSLVQLEYENGIPRNPFINAGAIVTADTLVSIYKNDTFNQILDFIKMVSNDKTIDFNEEIFHSELEHGFRNYALINMIKSFGNIHNDIDEVIKTYFKQCSIMMSPSQLASSMLFLANHGINPITNERILTESKAKRISSLMLTCGHYDASGDFAYKVGLPGKSGVGGGIVAIVPKKMAICVYSPKLNTQGNSLIGTKALELFTTKTGLSIF.

Positions 63, 113, 158, 165, 189, 241, and 259 each coordinate substrate.

This sequence belongs to the glutaminase family. In terms of assembly, homotetramer.

The catalysed reaction is L-glutamine + H2O = L-glutamate + NH4(+). The chain is Glutaminase from Aliarcobacter butzleri (strain RM4018) (Arcobacter butzleri).